Reading from the N-terminus, the 289-residue chain is ATP phosphoribosyltransferase (289 aa).

This sequence belongs to the ATP phosphoribosyltransferase family. Long subfamily. The cofactor is Mg(2+).

It is found in the cytoplasm. It catalyses the reaction 1-(5-phospho-beta-D-ribosyl)-ATP + diphosphate = 5-phospho-alpha-D-ribose 1-diphosphate + ATP. Its pathway is amino-acid biosynthesis; L-histidine biosynthesis; L-histidine from 5-phospho-alpha-D-ribose 1-diphosphate: step 1/9. Its activity is regulated as follows. Feedback inhibited by histidine. Its function is as follows. Catalyzes the condensation of ATP and 5-phosphoribose 1-diphosphate to form N'-(5'-phosphoribosyl)-ATP (PR-ATP). Has a crucial role in the pathway because the rate of histidine biosynthesis seems to be controlled primarily by regulation of HisG enzymatic activity. The polypeptide is ATP phosphoribosyltransferase (Methanosarcina mazei (strain ATCC BAA-159 / DSM 3647 / Goe1 / Go1 / JCM 11833 / OCM 88) (Methanosarcina frisia)).